The following is a 368-amino-acid chain: Phospho-N-acetylmuramoyl-pentapeptide-transferase (368 aa).

9 consecutive transmembrane segments (helical) span residues 30–50, 72–92, 98–118, 139–159, 170–190, 208–228, 238–258, 264–286, and 345–365; these read AAAITSLLITLLAGPGFIRYL, LPTMGGLLIIFSIEVSVLLWS, HVWLIMLAVLWMGVVGFIDDY, VALGLVVGIYTSLDPAFSVLM, LTIDYGYFYIPVVIFIITALS, AIVVFALGGFAYLAGNAVYAT, GGEIAVVCMAIVMASVGFLWF, EIFMGDTGSLALGSAIAVIALLI, and KIVIRFWIITILFFLTSLMTL.

The protein belongs to the glycosyltransferase 4 family. MraY subfamily. Mg(2+) serves as cofactor.

Its subcellular location is the cell inner membrane. The enzyme catalyses UDP-N-acetyl-alpha-D-muramoyl-L-alanyl-gamma-D-glutamyl-meso-2,6-diaminopimeloyl-D-alanyl-D-alanine + di-trans,octa-cis-undecaprenyl phosphate = di-trans,octa-cis-undecaprenyl diphospho-N-acetyl-alpha-D-muramoyl-L-alanyl-D-glutamyl-meso-2,6-diaminopimeloyl-D-alanyl-D-alanine + UMP. It participates in cell wall biogenesis; peptidoglycan biosynthesis. Its function is as follows. Catalyzes the initial step of the lipid cycle reactions in the biosynthesis of the cell wall peptidoglycan: transfers peptidoglycan precursor phospho-MurNAc-pentapeptide from UDP-MurNAc-pentapeptide onto the lipid carrier undecaprenyl phosphate, yielding undecaprenyl-pyrophosphoryl-MurNAc-pentapeptide, known as lipid I. This is Phospho-N-acetylmuramoyl-pentapeptide-transferase from Chlorobium luteolum (strain DSM 273 / BCRC 81028 / 2530) (Pelodictyon luteolum).